A 502-amino-acid chain; its full sequence is NAD(P)H-quinone oxidoreductase chain 4, chloroplastic (502 aa).

The next 14 helical transmembrane spans lie at phenylalanine 4–leucine 24, isoleucine 37–leucine 57, leucine 87–valine 107, leucine 113–serine 130, leucine 134–methionine 154, phenylalanine 167–leucine 187, isoleucine 213–histidine 233, histidine 244–isoleucine 264, alanine 274–alanine 294, methionine 315–leucine 335, glutamine 336–aspartate 356, leucine 388–threonine 408, leucine 419–leucine 439, and leucine 464–valine 484.

This sequence belongs to the complex I subunit 4 family.

It is found in the plastid. The protein localises to the chloroplast thylakoid membrane. It catalyses the reaction a plastoquinone + NADH + (n+1) H(+)(in) = a plastoquinol + NAD(+) + n H(+)(out). The catalysed reaction is a plastoquinone + NADPH + (n+1) H(+)(in) = a plastoquinol + NADP(+) + n H(+)(out). This chain is NAD(P)H-quinone oxidoreductase chain 4, chloroplastic, found in Lolium perenne (Perennial ryegrass).